The following is a 341-amino-acid chain: Queuosine 5'-phosphate N-glycosylase/hydrolase (341 aa).

Methionine 1 carries the N-acetylmethionine modification. Queuine contacts are provided by histidine 53, phenylalanine 237, aspartate 239, aspartate 314, tyrosine 315, and aspartate 319. Residue aspartate 239 is the Nucleophile or transition state stabilizer of the active site.

This sequence belongs to the QNG1 protein family.

It catalyses the reaction queuosine 5'-phosphate + H2O = queuine + D-ribose 5-phosphate. Functionally, catalyzes the hydrolysis of queuosine 5'-phosphate, releasing the nucleobase queuine (q). Is required for salvage of queuine from exogenous queuosine (Q) that is imported and then converted to queuosine 5'-phosphate intracellularly. The chain is Queuosine 5'-phosphate N-glycosylase/hydrolase from Bos taurus (Bovine).